The primary structure comprises 1347 residues: Protocadherin-11 X-linked (1347 aa).

A signal peptide spans 1–23 (MDLLSGTYIFAVLLACVVFHSGA). The Extracellular portion of the chain corresponds to 24–812 (QEKNYTIREE…VSSPTSDYVK (789 aa)). 7 consecutive Cadherin domains span residues 26–139 (KNYT…APLF), 140–249 (PATV…HPVF), 250–355 (KETE…VPSI), 362–466 (NPVN…APVF), 467–570 (TQSF…SPVF), 571–673 (THNE…KPVF), and 677–795 (PSNC…APVT). N-linked (GlcNAc...) asparagine glycans are attached at residues asparagine 27, asparagine 48, and asparagine 54. N-linked (GlcNAc...) asparagine glycosylation is present at asparagine 344. An N-linked (GlcNAc...) asparagine glycan is attached at asparagine 553. Asparagine 773 carries an N-linked (GlcNAc...) asparagine glycan. A helical transmembrane segment spans residues 813–833 (ILVAAVAGTITVVVVIFITAV). At 834-1347 (VRCRQAPHLK…DSPIMEEHPL (514 aa)) the chain is on the cytoplasmic side. Disordered regions lie at residues 1057 to 1091 (LPEGSQESSSDGGLGDHDAGSLTSTSHGLPLGYPQ), 1097 to 1116 (RATPSNRTEGDGNSDPESTF), and 1326 to 1347 (FTPRQQARPSRGDSPIMEEHPL).

In terms of tissue distribution, expressed strongly in fetal brain and brain (cortex, amygdala, thalamus, substantia nigra, hippocampus, caudate nucleus and corpus callosum). Expressed at low level in testis.

The protein resides in the cell membrane. Potential calcium-dependent cell-adhesion protein. The protein is Protocadherin-11 X-linked (PCDH11X) of Homo sapiens (Human).